The chain runs to 609 residues: Dihydroxy-acid dehydratase 1 (609 aa).

A Mg(2+)-binding site is contributed by Asp-81. Cys-122 lines the [2Fe-2S] cluster pocket. Mg(2+)-binding residues include Asp-123 and Lys-124. An N6-carboxylysine modification is found at Lys-124. Cys-195 serves as a coordination point for [2Fe-2S] cluster. Glu-491 contacts Mg(2+). Residue Ser-517 is the Proton acceptor of the active site.

This sequence belongs to the IlvD/Edd family. In terms of assembly, homodimer. [2Fe-2S] cluster serves as cofactor. It depends on Mg(2+) as a cofactor.

It catalyses the reaction (2R)-2,3-dihydroxy-3-methylbutanoate = 3-methyl-2-oxobutanoate + H2O. It carries out the reaction (2R,3R)-2,3-dihydroxy-3-methylpentanoate = (S)-3-methyl-2-oxopentanoate + H2O. Its pathway is amino-acid biosynthesis; L-isoleucine biosynthesis; L-isoleucine from 2-oxobutanoate: step 3/4. It functions in the pathway amino-acid biosynthesis; L-valine biosynthesis; L-valine from pyruvate: step 3/4. In terms of biological role, functions in the biosynthesis of branched-chain amino acids. Catalyzes the dehydration of (2R,3R)-2,3-dihydroxy-3-methylpentanoate (2,3-dihydroxy-3-methylvalerate) into 2-oxo-3-methylpentanoate (2-oxo-3-methylvalerate) and of (2R)-2,3-dihydroxy-3-methylbutanoate (2,3-dihydroxyisovalerate) into 2-oxo-3-methylbutanoate (2-oxoisovalerate), the penultimate precursor to L-isoleucine and L-valine, respectively. The chain is Dihydroxy-acid dehydratase 1 from Acinetobacter baylyi (strain ATCC 33305 / BD413 / ADP1).